We begin with the raw amino-acid sequence, 228 residues long: Rab-like protein 2B (228 aa).

Residues glycine 28–serine 35, aspartate 76–glutamine 80, and asparagine 133–aspartate 136 each bind GTP. The segment at leucine 200–serine 228 is disordered.

Belongs to the small GTPase superfamily. Rab family. In terms of assembly, interacts (in its GTP-bound form) with CEP19 (via residues 121-150); this interaction is required for its localization to the mother centriole and cilium basal body. Interacts (in its GTP-bound form) with the intraflagellar transport (IFT) complex B (via the IFT74-IFT81 heterodimer). Binding to CEP19 and the IFT74-IFT81 heterodimer is mutually exclusive. Expressed in the testis.

The protein resides in the cytoplasm. The protein localises to the cytoskeleton. It localises to the microtubule organizing center. It is found in the centrosome. Its subcellular location is the centriole. The protein resides in the cilium basal body. Small GTPase required for ciliation. Activated in a guanine nucleotide exchange factor (GEF)-independent manner via its intrinsic GDP for GTP nucleotide exchange ability. Involved in ciliary assembly by binding the intraflagellar transport (IFT) complex B from the large pool pre-docked at the base of the cilium and thus triggers its entry into the cilia. The protein is Rab-like protein 2B (RABL2B) of Homo sapiens (Human).